A 516-amino-acid chain; its full sequence is Cytochrome P450 monooxygenase lcsI (516 aa).

The helical transmembrane segment at 20–42 (ICVAAGCAFALSLLYLYVRALYL) threads the bilayer. Residues Asn131, Asn184, Asn415, Asn420, and Asn442 are each glycosylated (N-linked (GlcNAc...) asparagine). Position 456 (Cys456) interacts with heme.

Belongs to the cytochrome P450 family. It depends on heme as a cofactor.

It localises to the membrane. It functions in the pathway secondary metabolite biosynthesis. Cytochrome P450 monooxygenase; part of the gene cluster that mediates the biosynthesis of the lipopeptide antibiotics leucinostatins that show extensive biological activities, including antimalarial, antiviral, antibacterial, antifungal, and antitumor activities, as well as phytotoxic. Leucinostatin A contains nine amino acid residues, including the unusual amino acid 4-methyl-L-proline (MePro), 2-amino-6-hydroxy-4-methyl-8-oxodecanoic acid (AHyMeOA), 3-hydroxyleucine (HyLeu), alpha-aminoisobutyric acid (AIB), beta-Ala, a 4-methylhex-2-enoic acid at the N-terminus as well as a N1,N1-dimethylpropane-1,2-diamine (DPD) at the C-terminus. The biosynthesis of leucinostatins is probably initiated with the assembly of 4-methylhex-2-enoic acid by a reducing PKS. Two reducing polyketide synthases, lcsB and lcsC, have been identified in the cluster and it is not clear which is the one that assembles 4-methylhex-2-enoic acid since both contain KS, AT, DH, cMT, ER, KR and ACP domains. The polyketide residue might be transferred to the NRPS lcsA, mediated by two additional enzymes, the acyl-CoA ligase lcsD and the thioesterase lcsE. The linear polyketide carboxylic acid, which is released from PKS, is converted to a CoA thioester by lcsD, and then lcsE hydrolyzes the thiol bond and shuttles the polyketide intermediate to lcsA. The C domain of the first module catalyzed the condensation of 4-methylhex-2-enoic acid and MePro carried by domain A1, followed by successive condensations of nine amino acids to trigger the elongation of the linear peptide. A5 and A6 domains of lcsA are proposed to incorporate leucine, A2 AHyMeOA, and A3 incorporates HyLeu. A4, A7 and A8 incorporate AIB. The AHyMeOA in leucinostatin A activated by the A2 might be produced by the second PKS (lcsB or lcsC) present within the cluster. The MePro is probably produced via leucine cyclization and may originate from a separate pathway, independent of the cluster. Another nonproteinogenic amino acid, beta-Ala, could be produced by an aspartic acid decarboxylase also localized outside of the cluster. Two candidates are VFPBJ_01400 and VFPBJ_10476. The final peptide scaffold may be released by the NAD(P)H-dependent thioester reductase (TE) at the C-terminal region of lcsA. Transamination of the lcsA product by the transaminase lcsP may produce DPD at the C-terminus. Further hydroxylation steps performed alternatively by the cytochrome P450 monooxygenases lcsI, lcsK and lcsN then yield the non-methylated leucinostatins precursor. It is also possible that leucines can be hydroxylated prior to their incorporation into the peptide. Varying extents of methylation then lead to the formation of leucinostatins A and B. In Purpureocillium lilacinum (Paecilomyces lilacinus), this protein is Cytochrome P450 monooxygenase lcsI.